Reading from the N-terminus, the 418-residue chain is Methylmalonic aciduria type A protein, mitochondrial (418 aa).

The transit peptide at 1–65 directs the protein to the mitochondrion; that stretch reads MPMLLPHPHQ…LLSDGLKRKL (65 aa). Residues 150–158, Asp292, and 328–330 each bind GTP; these read GPPGAGKST and SAR.

Belongs to the SIMIBI class G3E GTPase family. ArgK/MeaB subfamily. As to quaternary structure, homodimer. Interacts with MMUT (the apoenzyme form); the interaction is GTP dependent. In terms of tissue distribution, widely expressed. Highest expression is observed in liver and skeletal muscle.

It localises to the mitochondrion. The protein resides in the cytoplasm. It catalyses the reaction GTP + H2O = GDP + phosphate + H(+). GTPase activity is stimulated by MMUT. GTPase, binds and hydrolyzes GTP. Involved in intracellular vitamin B12 metabolism, mediates the transport of cobalamin (Cbl) into mitochondria for the final steps of adenosylcobalamin (AdoCbl) synthesis. Functions as a G-protein chaperone that assists AdoCbl cofactor delivery from MMAB to the methylmalonyl-CoA mutase (MMUT). Plays a dual role as both a protectase and a reactivase for MMUT. Protects MMUT from progressive inactivation by oxidation by decreasing the rate of the formation of the oxidized inactive cofactor hydroxocobalamin (OH2Cbl). Additionally acts a reactivase by promoting the replacement of OH2Cbl by the active cofactor AdoCbl, restoring the activity of MMUT in the presence and hydrolysis of GTP. The polypeptide is Methylmalonic aciduria type A protein, mitochondrial (Homo sapiens (Human)).